Consider the following 558-residue polypeptide: Vanin-like protein 1 (558 aa).

The N-terminal stretch at 1–22 is a signal peptide; sequence MSNTWWWLSVVLLILGLMPGMS. In terms of domain architecture, CN hydrolase spans 33-299; the sequence is YTAGVVEFKQ…RAIYVAQVPK (267 aa). Residue asparagine 65 is glycosylated (N-linked (GlcNAc...) asparagine). Glutamate 76 functions as the Proton acceptor in the catalytic mechanism. Residues asparagine 103, asparagine 120, and asparagine 128 are each glycosylated (N-linked (GlcNAc...) asparagine). Lysine 171 serves as the catalytic Proton donor. Asparagine 180 carries an N-linked (GlcNAc...) asparagine glycan. Cysteine 203 acts as the Nucleophile in catalysis. N-linked (GlcNAc...) asparagine glycosylation is found at asparagine 354 and asparagine 379. Serine 531 carries GPI-anchor amidated serine lipidation. Residues 532–558 constitute a propeptide, removed in mature form; that stretch reads GSPGLRILGGWLAMPLIILAIARTMSS.

It belongs to the carbon-nitrogen hydrolase superfamily. BTD/VNN family. As to expression, expressed in larvae and early pupae. Expressed in third instar larvae.

It localises to the cell membrane. This is Vanin-like protein 1 from Drosophila melanogaster (Fruit fly).